Here is a 422-residue protein sequence, read N- to C-terminus: ATP phosphoribosyltransferase regulatory subunit (422 aa).

This sequence belongs to the class-II aminoacyl-tRNA synthetase family. HisZ subfamily. In terms of assembly, heteromultimer composed of HisG and HisZ subunits.

It localises to the cytoplasm. Its pathway is amino-acid biosynthesis; L-histidine biosynthesis; L-histidine from 5-phospho-alpha-D-ribose 1-diphosphate: step 1/9. Its function is as follows. Required for the first step of histidine biosynthesis. May allow the feedback regulation of ATP phosphoribosyltransferase activity by histidine. The polypeptide is ATP phosphoribosyltransferase regulatory subunit (Clostridium botulinum (strain Langeland / NCTC 10281 / Type F)).